The primary structure comprises 211 residues: Imidazole glycerol phosphate synthase subunit HisH (211 aa).

The 208-residue stretch at Arg4–Leu211 folds into the Glutamine amidotransferase type-1 domain. Catalysis depends on Cys82, which acts as the Nucleophile. Active-site residues include His192 and Glu194.

Heterodimer of HisH and HisF.

It is found in the cytoplasm. The catalysed reaction is 5-[(5-phospho-1-deoxy-D-ribulos-1-ylimino)methylamino]-1-(5-phospho-beta-D-ribosyl)imidazole-4-carboxamide + L-glutamine = D-erythro-1-(imidazol-4-yl)glycerol 3-phosphate + 5-amino-1-(5-phospho-beta-D-ribosyl)imidazole-4-carboxamide + L-glutamate + H(+). It carries out the reaction L-glutamine + H2O = L-glutamate + NH4(+). The protein operates within amino-acid biosynthesis; L-histidine biosynthesis; L-histidine from 5-phospho-alpha-D-ribose 1-diphosphate: step 5/9. In terms of biological role, IGPS catalyzes the conversion of PRFAR and glutamine to IGP, AICAR and glutamate. The HisH subunit catalyzes the hydrolysis of glutamine to glutamate and ammonia as part of the synthesis of IGP and AICAR. The resulting ammonia molecule is channeled to the active site of HisF. This Thermobifida fusca (strain YX) protein is Imidazole glycerol phosphate synthase subunit HisH.